Consider the following 282-residue polypeptide: Putative phosphatase in upp 3'region (282 aa).

Aspartate 17 acts as the Nucleophile in catalysis. Aspartate 17 lines the Mg(2+) pocket. Residue leucine 18 participates in phosphate binding. Position 19 (aspartate 19) interacts with Mg(2+). Phosphate-binding positions include 53 to 54 (TG) and lysine 211. Residues aspartate 234 and serine 235 each contribute to the Mg(2+) site. Asparagine 237 is a binding site for phosphate.

The protein belongs to the HAD-like hydrolase superfamily. Cof family. Mg(2+) serves as cofactor.

In Metamycoplasma hominis (Mycoplasma hominis), this protein is Putative phosphatase in upp 3'region.